Consider the following 880-residue polypeptide: Probable receptor-like protein kinase At5g38990 (880 aa).

Residues 1 to 21 (MICHVLVIFTILVSAVVDATA) form the signal peptide. Topologically, residues 22 to 440 (SYEPTDVFLI…GKGKSSHVLP (419 aa)) are extracellular. Residues Asn46, Asn136, Asn158, Asn210, Asn256, Asn263, Asn297, and Asn324 are each glycosylated (N-linked (GlcNAc...) asparagine). A helical transmembrane segment spans residues 441 to 461 (IIIAVVGSAVALAFFVLVVVL). Topologically, residues 462 to 880 (VVMKRKKKSN…FSEINEPKAR (419 aa)) are cytoplasmic. Positions 471 to 505 (NESSVDTTNKPSTNSSWGPLLHGTGSTNTKSASSL) are disordered. Polar residues-rich tracts occupy residues 472–487 (ESSV…NSSW) and 494–505 (TGSTNTKSASSL). The Protein kinase domain occupies 525–810 (FEEKLIIGVG…EFALQLHETA (286 aa)). Residues 531–539 (IGVGGFGSV) and Lys554 contribute to the ATP site. The active-site Proton acceptor is Asp653. The tract at residues 820-846 (LDLMPSGEVGTTTDGEDDLFSRTTGHV) is disordered.

This sequence belongs to the protein kinase superfamily. Ser/Thr protein kinase family.

The protein resides in the membrane. The sequence is that of Probable receptor-like protein kinase At5g38990 from Arabidopsis thaliana (Mouse-ear cress).